The chain runs to 202 residues: Transcription factor IBH1 (202 aa).

Residues 1 to 16 (MDAKRTPPPPTPPNPN) show a composition bias toward pro residues. A disordered region spans residues 1 to 33 (MDAKRTPPPPTPPNPNPSVIGSGAAADGGGFGR). The region spanning 136–185 (TSAAARAVPPPPRQQGEPPRAEALRRLVPGGAGMEYSSLLEETADYLRSL) is the bHLH domain.

This sequence belongs to the bHLH protein family. In terms of assembly, interacts with ILI1. Binds to ILI5/BUL1 and BC1. Interacts with BCL1 and BCL2. As to expression, highly expressed in roots and at lower levels in leaf blades, leaf sheaths, lamina joint, stems and panicles.

Functionally, atypical and probable non DNA-binding bHLH transcription factor that acts as a negative regulator of cell elongation and plant development. Binds the transcription factor ILI1 and forms a heterodimer of antagonistic bHLH transcription factors that function downstream of BZR1 to mediate brassinosteroid regulation of cell elongation and lamina inclination. The chain is Transcription factor IBH1 from Oryza sativa subsp. japonica (Rice).